The sequence spans 310 residues: Epoxyqueuosine reductase (310 aa).

D133 serves as the catalytic Proton donor. The region spanning 179 to 208 (YDNPSDKDYCGTCTRCVDACPTDAILQDNL) is the 4Fe-4S ferredoxin-type domain. C188, C191, C194, C198, C214, C241, C244, and C248 together coordinate [4Fe-4S] cluster.

Belongs to the QueG family. As to quaternary structure, monomer. It depends on cob(II)alamin as a cofactor. [4Fe-4S] cluster serves as cofactor.

It is found in the cytoplasm. The catalysed reaction is epoxyqueuosine(34) in tRNA + AH2 = queuosine(34) in tRNA + A + H2O. It functions in the pathway tRNA modification; tRNA-queuosine biosynthesis. In terms of biological role, catalyzes the conversion of epoxyqueuosine (oQ) to queuosine (Q), which is a hypermodified base found in the wobble positions of tRNA(Asp), tRNA(Asn), tRNA(His) and tRNA(Tyr). The polypeptide is Epoxyqueuosine reductase (Cyclobacterium marinum (strain ATCC 25205 / DSM 745 / LMG 13164 / NCIMB 1802) (Flectobacillus marinus)).